Reading from the N-terminus, the 94-residue chain is Cyclin-dependent kinases regulatory subunit (94 aa).

Belongs to the CKS family. As to quaternary structure, forms a homohexamer that can probably bind six kinase subunits. Interacts with cdk-1.

It is found in the nucleus. Binds to the catalytic subunit of the cyclin dependent kinases and is essential for their biological function. Has a role in the exit from M phase during early mitotic cell division. More specifically, thought to act by degrading B-type cyclins that causes breakdown of nuclear envelope and exit mitosis. The polypeptide is Cyclin-dependent kinases regulatory subunit (cks-1) (Caenorhabditis elegans).